The following is a 146-amino-acid chain: MVKPIHVLSGPNLNLLGTREPEIYGKDTLDDVRTRCEARAASRGVSVVFRQSNHEGVLIDWVHEARESASALVINPAGYGHTSIALLDALKTLSIPVIECHLSNPAAREEFRRHTYVSLAATGIVSGFGAASYELAIEAAFGLIRA.

The Proton acceptor role is filled by Tyr-24. Substrate is bound by residues Asn-75, His-81, and Asp-88. Catalysis depends on His-101, which acts as the Proton donor. Substrate contacts are provided by residues 102–103 (LS) and Arg-112.

This sequence belongs to the type-II 3-dehydroquinase family. As to quaternary structure, homododecamer.

It carries out the reaction 3-dehydroquinate = 3-dehydroshikimate + H2O. Its pathway is metabolic intermediate biosynthesis; chorismate biosynthesis; chorismate from D-erythrose 4-phosphate and phosphoenolpyruvate: step 3/7. In terms of biological role, catalyzes a trans-dehydration via an enolate intermediate. The sequence is that of 3-dehydroquinate dehydratase from Caulobacter vibrioides (strain ATCC 19089 / CIP 103742 / CB 15) (Caulobacter crescentus).